A 435-amino-acid chain; its full sequence is Putative F-box/kelch-repeat protein At1g20790 (435 aa).

One can recognise an F-box domain in the interval Met1–Ile49. 2 Kelch repeats span residues Pro192–Asp238 and Leu280–Pro335.

In Arabidopsis thaliana (Mouse-ear cress), this protein is Putative F-box/kelch-repeat protein At1g20790.